A 922-amino-acid polypeptide reads, in one-letter code: Up-regulator of cell proliferation (922 aa).

Residues 1–20 (MASSGHSDLGEVTSEIKASE) are disordered. Position 3 is a phosphoserine (S3). The VLIG-type G domain occupies 680–920 (RSRLVVLSAL…NIQQLIELVR (241 aa)).

Belongs to the TRAFAC class dynamin-like GTPase superfamily. Very large inducible GTPase (VLIG) family.

It localises to the cytoplasm. The protein localises to the nucleus. Functionally, may be involved in cell cycle progression through the regulation of cyclin D1 expression. The sequence is that of Up-regulator of cell proliferation (URGCP) from Bos taurus (Bovine).